We begin with the raw amino-acid sequence, 509 residues long: MQMDAVVILLILAFPIASVYVLFYHKKRVDGLSEPPGPPGLPFIGNFYQLYKAPCIHEYLCTLSKRYGSLMTLRMGSVPILVVSSPKMAKEVLKTQDLAYCSRPMMTGMQKLSYNGLDVAFSPYSEHWRQVRKFCTLELFTQKRAQIDFRHVHEQEVSRMIARLSETAAASKDVNAFECFSNLATSIISRVAFGKRHDEDGIGKERLQRMLSELDTMLSVYFVSDFFPMFGWIDSLTGMRARLDRTFKEMDMFYEELIDDHLKPDRPESLTEDIIDVMLKNKGCSSSSLTKDTMKAILLNVFNGGTGTSASLLVWAMTALMRNRGVMKKVQEEIRSVIGKKGNVDEDDIQNLPYLRAVVKETMRLYPTGALLIPRKTIESSIIGEDKDHMYMIKPKTLVYVSMWAIGRDPEIWKNPMKFVPERFLERHDINYQGQQFEYIPFGAGRRICPGIHLGLTTVELALANLLYTFNWEPPVGTRFEDINDETVNGITLQKKNALYIRPKTYMFS.

Residues Ala-5–His-25 traverse the membrane as a helical segment. The tract at residues Thr-368–Ile-373 is substrate specificity. Cys-449 is a binding site for heme.

It belongs to the cytochrome P450 family. Heme is required as a cofactor.

Its subcellular location is the microsome membrane. It catalyses the reaction xanthotoxin + reduced [NADPH--hemoprotein reductase] + O2 = 5-hydroxyxanthotoxin + oxidized [NADPH--hemoprotein reductase] + H2O + 2 H(+). It participates in secondary metabolite biosynthesis. Functionally, involved in the biosynthesis of coumarins and furanocoumarins (FCs), natural products required for defense responses against attacks by predators with potential medical and agroindustrial usages such as anticoagulant, rodenticide and artificial vanilla substitutes. Catalyzes the conversion of xanthotoxin into 5-hydroxyxanthotoxin. The sequence is that of 5-OH-xanthotoxin synthase from Ammi majus (Bishop's weed).